The primary structure comprises 490 residues: Betaine aldehyde dehydrogenase (490 aa).

Aspartate 93 contacts K(+). Glycine 150–tryptophan 152 contacts NAD(+). Catalysis depends on lysine 162, which acts as the Charge relay system. An NAD(+)-binding site is contributed by lysine 176 to glutamate 179. Valine 180 is a K(+) binding site. Glycine 230 to serine 233 is a binding site for NAD(+). Leucine 246 contacts K(+). Glutamate 252 functions as the Proton acceptor in the catalytic mechanism. Residues glycine 254, cysteine 286, and glutamate 387 each contribute to the NAD(+) site. Catalysis depends on cysteine 286, which acts as the Nucleophile. A Cysteine sulfenic acid (-SOH) modification is found at cysteine 286. Residues lysine 457 and glycine 460 each coordinate K(+). Glutamate 464 acts as the Charge relay system in catalysis.

The protein belongs to the aldehyde dehydrogenase family. In terms of assembly, dimer of dimers. K(+) is required as a cofactor.

The catalysed reaction is betaine aldehyde + NAD(+) + H2O = glycine betaine + NADH + 2 H(+). Its pathway is amine and polyamine biosynthesis; betaine biosynthesis via choline pathway; betaine from betaine aldehyde: step 1/1. Involved in the biosynthesis of the osmoprotectant glycine betaine. Catalyzes the irreversible oxidation of betaine aldehyde to the corresponding acid. This is Betaine aldehyde dehydrogenase from Yersinia pseudotuberculosis serotype O:3 (strain YPIII).